Here is a 258-residue protein sequence, read N- to C-terminus: Indole-3-glycerol phosphate synthase (258 aa).

Belongs to the TrpC family.

The enzyme catalyses 1-(2-carboxyphenylamino)-1-deoxy-D-ribulose 5-phosphate + H(+) = (1S,2R)-1-C-(indol-3-yl)glycerol 3-phosphate + CO2 + H2O. The protein operates within amino-acid biosynthesis; L-tryptophan biosynthesis; L-tryptophan from chorismate: step 4/5. The chain is Indole-3-glycerol phosphate synthase from Exiguobacterium sibiricum (strain DSM 17290 / CCUG 55495 / CIP 109462 / JCM 13490 / 255-15).